We begin with the raw amino-acid sequence, 332 residues long: Isopentenyl phosphate kinase (332 aa).

Met1 bears the N-acetylmethionine mark. 18–22 (KLGGA) provides a ligand contact to ATP. Ala96 is a substrate binding site. Residue Gly97 coordinates ATP. Residues His101 and Gly202 each contribute to the substrate site. ATP is bound by residues Asp223, 228-233 (YDRPPS), Gly279, and Lys283.

The protein belongs to the isopentenyl phosphate kinase family.

The protein resides in the cytoplasm. It localises to the cytosol. It catalyses the reaction isopentenyl phosphate + ATP = isopentenyl diphosphate + ADP. In terms of biological role, catalyzes the formation of isopentenyl diphosphate (IPP), the universal five-carbon isoprenoid building block of all natural isoprenoids. Acts in parallel with the mevalonate (MVA) pathway and plays an important role in regulating the formation of both MVA and methylerythritol phosphate (MEP) pathway-derived terpenoid compounds by controlling the ratio of isopentenyl phosphate (IP) and dimethylallyl phosphate (DMAP) to isopentenyl diphosphate (IPP) and dimethylallyl diphosphate (DMAPP). Controls the levels of IP and DMAP that are competitive inhibitors of the farnesyl diphosphate synthase. Regulates the production of farnesyl diphosphate-derived terpenoids in the cytosol, and geranyl diphosphate-derived compounds in plastids. The chain is Isopentenyl phosphate kinase from Arabidopsis thaliana (Mouse-ear cress).